A 266-amino-acid chain; its full sequence is Methyl-coenzyme M reductase II subunit gamma (266 aa).

R123 contacts coenzyme M.

Belongs to the methyl-coenzyme M reductase gamma subunit family. In terms of assembly, MCR is a hexamer of two alpha, two beta, and two gamma chains, forming a dimer of heterotrimers. The cofactor is coenzyme F430.

It catalyses the reaction coenzyme B + methyl-coenzyme M = methane + coenzyme M-coenzyme B heterodisulfide. It participates in one-carbon metabolism; methyl-coenzyme M reduction; methane from methyl-coenzyme M: step 1/1. Functionally, component of the methyl-coenzyme M reductase (MCR) I that catalyzes the reductive cleavage of methyl-coenzyme M (CoM-S-CH3 or 2-(methylthio)ethanesulfonate) using coenzyme B (CoB or 7-mercaptoheptanoylthreonine phosphate) as reductant which results in the production of methane and the mixed heterodisulfide of CoB and CoM (CoM-S-S-CoB). This is the final step in methanogenesis. This chain is Methyl-coenzyme M reductase II subunit gamma (mrtG), found in Methanocaldococcus jannaschii (strain ATCC 43067 / DSM 2661 / JAL-1 / JCM 10045 / NBRC 100440) (Methanococcus jannaschii).